Reading from the N-terminus, the 414-residue chain is MFYINIAYIFMDLGMYGYITKTEKLNGMIKSNPEDFIVEEIPFDIKKDDNGKYLIIKARLYDWDTNRFVMYLARHMNISRKRITYAGTKDKRAVTTQYFCINTDRMFSGSINGIEIIEQFRSNDIIKLGDLYGNRFLIKVDYPGDLEKDSSETLKEINEKGGFPNFFGVQRFGSMRSNTHYIGKMIIKGEYEKAADKYLYDDNFDTEEYRINYGKNMDAKNSLKEYPGNLTFERSILGAIASGNKSSAFNALPKNLSIMFVHAFQSYLFNKMLSERMKHVKDLKTVIEGDLLYNIDDYFNPDKKRLIEANRYNLEMLNNLSSMDKIRPVIPLPGFDTRMPDGLQRDIMLKVLEDENVSLQDFKIPGEYSYMSSSGDYRIISAKPINLKFPEKNKLDFILGRGIYATSFLREIIK.

Catalysis depends on aspartate 90, which acts as the Nucleophile. One can recognise a TRUD domain in the interval glycine 162–alanine 382.

It belongs to the pseudouridine synthase TruD family.

The enzyme catalyses uridine(13) in tRNA = pseudouridine(13) in tRNA. Its function is as follows. Could be responsible for synthesis of pseudouridine from uracil-13 in transfer RNAs. In Picrophilus torridus (strain ATCC 700027 / DSM 9790 / JCM 10055 / NBRC 100828 / KAW 2/3), this protein is Probable tRNA pseudouridine synthase D.